A 130-amino-acid polypeptide reads, in one-letter code: Small ribosomal subunit protein uS8 (130 aa).

The protein belongs to the universal ribosomal protein uS8 family. Part of the 30S ribosomal subunit.

One of the primary rRNA binding proteins, it binds directly to 16S rRNA central domain where it helps coordinate assembly of the platform of the 30S subunit. The polypeptide is Small ribosomal subunit protein uS8 (Methanothermobacter thermautotrophicus (strain ATCC 29096 / DSM 1053 / JCM 10044 / NBRC 100330 / Delta H) (Methanobacterium thermoautotrophicum)).